Here is a 398-residue protein sequence, read N- to C-terminus: ATP-dependent RNA helicase eIF4A (398 aa).

Positions 25 to 53 (DSFDTMNLKPELLRGVYAYGFERPSAIQQ) match the Q motif motif. In terms of domain architecture, Helicase ATP-binding spans 56–226 (IMPVIKGHDV…TKFMRDPVRI (171 aa)). 69 to 76 (AQSGTGKT) lines the ATP pocket. Residues 174–177 (DEAD) carry the DEAD box motif. The Helicase C-terminal domain occupies 237 to 398 (GIKQFYIAVE…EMPMNVADLI (162 aa)).

Belongs to the DEAD box helicase family. eIF4A subfamily. In terms of assembly, component of the eIF4F complex, which composition varies with external and internal environmental conditions. It is composed of at least eIF4A, eIF4E and eIF4G.

It is found in the cytoplasm. It carries out the reaction ATP + H2O = ADP + phosphate + H(+). In terms of biological role, ATP-dependent RNA helicase which is a subunit of the eIF4F complex involved in cap recognition and is required for mRNA binding to ribosome. In the current model of translation initiation, eIF4A unwinds RNA secondary structures in the 5'-UTR of mRNAs which is necessary to allow efficient binding of the small ribosomal subunit, and subsequent scanning for the initiator codon. In Sclerotinia sclerotiorum (strain ATCC 18683 / 1980 / Ss-1) (White mold), this protein is ATP-dependent RNA helicase eIF4A (tif1).